The chain runs to 871 residues: Pentatricopeptide repeat-containing protein At3g06920 (871 aa).

21 PPR repeats span residues 97–131, 132–166, 167–201, 202–236, 237–271, 272–306, 307–341, 342–372, 376–410, 411–445, 446–480, 481–515, 516–550, 551–585, 586–620, 621–655, 656–690, 691–725, 726–760, 761–795, and 796–830; these read CPESYNSLLLVMARCRNFDALDQILGEMSVAGFGP, SVNTCIEMVLGCVKANKLREGYDVVQMMRKFKFRP, AFSAYTTLIGAFSAVNHSDMMLTLFQQMQELGYEP, TVHLFTTLIRGFAKEGRVDSALSLLDEMKSSSLDA, DIVLYNVCIDSFGKVGKVDMAWKFFHEIEANGLKP, DEVTYTSMIGVLCKANRLDEAVEMFEHLEKNRRVP, CTYAYNTMIMGYGSAGKFDEAYSLLERQRAKGSIP, SVIAYNCILTCLRKMGKVDEALKVFEEMKKD, NLSTYNILIDMLCRAGKLDTAFELRDSMQKAGLFP, NVRTVNIMVDRLCKSQKLDEACAMFEEMDYKVCTP, DEITFCSLIDGLGKVGRVDDAYKVYEKMLDSDCRT, NSIVYTSLIKNFFNHGRKEDGHKIYKDMINQNCSP, DLQLLNTYMDCMFKAGEPEKGRAMFEEIKARRFVP, DARSYSILIHGLIKAGFANETYELFYSMKEQGCVL, DTRAYNIVIDGFCKCGKVNKAYQLLEEMKTKGFEP, TVVTYGSVIDGLAKIDRLDEAYMLFEEAKSKRIEL, NVVIYSSLIDGFGKVGRIDEAYLILEELMQKGLTP, NLYTWNSLLDALVKAEEINEALVCFQSMKELKCTP, NQVTYGILINGLCKVRKFNKAFVFWQEMQKQGMKP, STISYTTMISGLAKAGNIAEAGALFDRFKANGGVP, and DSACYNAMIEGLSNGNRAMDAFSLFEETRRRGLPI.

This sequence belongs to the PPR family. P subfamily.

The sequence is that of Pentatricopeptide repeat-containing protein At3g06920 from Arabidopsis thaliana (Mouse-ear cress).